Consider the following 242-residue polypeptide: Peroxisomal membrane protein 11-3 (242 aa).

Residues 1 to 22 form a disordered region; that stretch reads MAAAAAAAGSSDSRKPAAHPPP. Topologically, residues 1–102 are cytoplasmic; the sequence is MAAAAAAAGS…LRAHPHPPPA (102 aa). A helical membrane pass occupies residues 103–123; the sequence is VALLAYGGEGVYYFLEQFVWL. The Lumenal portion of the chain corresponds to 124-214; sequence AKAGLLPAHL…MALGDVTDGK (91 aa). Residues 215-235 form a helical membrane-spanning segment; sequence GLLGSSTLMASAGLLSALISA. Topologically, residues 236–242 are cytoplasmic; the sequence is HKNWNSC.

This sequence belongs to the peroxin-11 family. In terms of tissue distribution, expressed in seedlings, roots, leaf sheaths, spikelets and endosperm.

The protein localises to the peroxisome membrane. Involved in peroxisomal proliferation. This is Peroxisomal membrane protein 11-3 (PEX11-3) from Oryza sativa subsp. japonica (Rice).